The following is a 252-amino-acid chain: Glucosamine-6-phosphate deaminase (252 aa).

Asp-67 (proton acceptor; for enolization step) is an active-site residue. Asn-137 serves as the catalytic For ring-opening step. Catalysis depends on His-139, which acts as the Proton acceptor; for ring-opening step. Glu-144 (for ring-opening step) is an active-site residue.

Belongs to the glucosamine/galactosamine-6-phosphate isomerase family. NagB subfamily.

The enzyme catalyses alpha-D-glucosamine 6-phosphate + H2O = beta-D-fructose 6-phosphate + NH4(+). Its pathway is amino-sugar metabolism; N-acetylneuraminate degradation; D-fructose 6-phosphate from N-acetylneuraminate: step 5/5. In terms of biological role, catalyzes the reversible isomerization-deamination of glucosamine 6-phosphate (GlcN6P) to form fructose 6-phosphate (Fru6P) and ammonium ion. In Staphylococcus aureus (strain MRSA252), this protein is Glucosamine-6-phosphate deaminase.